Consider the following 420-residue polypeptide: Carboxypeptidase A4 (420 aa).

Positions 1–16 (MKWLLFFGALIGAGIC) are cleaved as a signal peptide. A propeptide spans 17-113 (GRDKFFGDQV…EMQHNEGIER (97 aa)) (activation peptide). Positions 69, 71, 118, 122, 123, 126, and 162 each coordinate a protein. Residues 121–415 (AYHPLEAIYH…LGLKTIMEHV (295 aa)) enclose the Peptidase M14 domain. Zn(2+) contacts are provided by H180 and E183. A disulfide bridge connects residues C249 and C272. A glycan (N-linked (GlcNAc...) asparagine) is linked at N259. H307 contacts Zn(2+). Catalysis depends on E381, which acts as the Proton donor/acceptor.

Belongs to the peptidase M14 family. In terms of assembly, interacts with LXN. Zn(2+) is required as a cofactor.

The protein localises to the secreted. Functionally, metalloprotease that cleaves hydrophobic C-terminal residues with a preference for -Phe, -Leu, -Ile, -Met, -Tyr and -Val. May function in peptide hormone and/or neuropeptide catabolism. This is Carboxypeptidase A4 (Cpa4) from Mus musculus (Mouse).